We begin with the raw amino-acid sequence, 101 residues long: Small ribosomal subunit protein uS14 (101 aa).

The protein belongs to the universal ribosomal protein uS14 family. Part of the 30S ribosomal subunit. Contacts proteins S3 and S10.

Binds 16S rRNA, required for the assembly of 30S particles and may also be responsible for determining the conformation of the 16S rRNA at the A site. The sequence is that of Small ribosomal subunit protein uS14 from Ehrlichia canis (strain Jake).